The primary structure comprises 370 residues: Uroporphyrinogen decarboxylase (370 aa).

Residues 29-33 (RQAGR), aspartate 79, tyrosine 155, serine 210, and histidine 342 contribute to the substrate site.

This sequence belongs to the uroporphyrinogen decarboxylase family. As to quaternary structure, homodimer.

Its subcellular location is the cytoplasm. It carries out the reaction uroporphyrinogen III + 4 H(+) = coproporphyrinogen III + 4 CO2. Its pathway is porphyrin-containing compound metabolism; protoporphyrin-IX biosynthesis; coproporphyrinogen-III from 5-aminolevulinate: step 4/4. Catalyzes the decarboxylation of four acetate groups of uroporphyrinogen-III to yield coproporphyrinogen-III. The polypeptide is Uroporphyrinogen decarboxylase (Verminephrobacter eiseniae (strain EF01-2)).